We begin with the raw amino-acid sequence, 195 residues long: Transcription factor 15 (195 aa).

The tract at residues 44-65 is disordered; the sequence is LEAARRGPGPGSGRRASNGAGP. The span at 56 to 65 shows a compositional bias: low complexity; that stretch reads GRRASNGAGP. Phosphoserine is present on serine 60. The 53-residue stretch at 70-122 folds into the bHLH domain; that stretch reads RQRQAANARERDRTQSVNTAFTALRTLIPTEPVDRKLSKIETLRLASSYIAHL.

In terms of assembly, heterodimer; efficient DNA binding requires dimerization with another bHLH protein, such as TCF3/E12. Interacts with MEOX2. Expressed in heart and skeletal muscle. Specifically expressed in a subpopulation of embryonic stem cells (ESCs), that are still undifferentiated but primed for ifferentiation. Expressed in hematopoietic stem cells (HSCs).

The protein localises to the nucleus. Functionally, early transcription factor that plays a key role in somitogenesis, paraxial mesoderm development and regulation of stem cell pluripotency. Essential for the mesenchymal to epithelial transition associated with somite formation. Required for somite morphogenesis, thereby regulating patterning of the axial skeleton and skeletal muscles. Required for proper localization of somite epithelium markers during the mesenchymal to epithelial transition. Also plays a key role in regulation of stem cell pluripotency. Promotes pluripotency exit of embryonic stem cells (ESCs) by priming ESCs for differentiation. Acts as a key regulator of self-renewal of hematopoietic stem cells (HSCs) by mediating HSCs quiescence and long-term self-renewal. Together with MEOX2, regulates transcription in heart endothelial cells to regulate fatty acid transport across heart endothelial cells. Acts by forming a heterodimer with another helix-loop-helix (bHLH) protein, such as TCF3/E12, that binds DNA on E-box motifs (5'-CANNTG-3') and activates transcription of target genes. The protein is Transcription factor 15 of Mus musculus (Mouse).